We begin with the raw amino-acid sequence, 354 residues long: MELAAILFSLFFAMNIGASGAAASMGVAYGSGAIKKKTYALILCAVGVFAGAVIGGGEVVKTISSGIIPEQTITLTIVCIIIGAAALSLFTANLLGIPLSTSEVTVGAVVGVGVAYKVLFVNNLLIIVSFWVFVPLFAFGFTYFVSKLFRYFKIEVKSSKKQKILGIVLLVAGFFEAFSAGMNNVANAVGPLVAAGVLDVGKGTLYGGAFVALGALLLGRRVLETNGKKITRFSKGEGILLSGTGAGLVIISSVFGMPVPLAQVTSSSIIGIGMAKNGPNVFHKQVVQTMLKVWIVSPFLSLSISYLLVSLFLKADYYSIFIMVSVLLAAGGAISLTKAIRKERRSVHEQGGGI.

8 helical membrane passes run 3–23, 40–60, 77–97, 125–145, 164–184, 197–217, 293–313, and 320–340; these read LAAI…GAAA, ALIL…GEVV, IVCI…LLGI, LIIV…TYFV, ILGI…GMNN, VLDV…GALL, VWIV…SLFL, and IFIM…TKAI.

Belongs to the inorganic phosphate transporter (PiT) (TC 2.A.20) family.

It is found in the cell membrane. Functionally, involved in the import of sulfate. The chain is Sulfate permease CysP (cysP) from Bacillus subtilis (strain 168).